The chain runs to 691 residues: DNA ligase (691 aa).

NAD(+) contacts are provided by residues 41–45, 90–91, and E130; these read DAEYD and SL. Catalysis depends on K132, which acts as the N6-AMP-lysine intermediate. NAD(+) is bound by residues R153, E190, K307, and K331. Zn(2+) is bound by residues C425, C428, C443, and C449. Residues 610–691 enclose the BRCT domain; sequence APQGVLAGKT…MHTLLEGHAR (82 aa).

Belongs to the NAD-dependent DNA ligase family. LigA subfamily. The cofactor is Mg(2+). Requires Mn(2+) as cofactor.

It catalyses the reaction NAD(+) + (deoxyribonucleotide)n-3'-hydroxyl + 5'-phospho-(deoxyribonucleotide)m = (deoxyribonucleotide)n+m + AMP + beta-nicotinamide D-nucleotide.. Functionally, DNA ligase that catalyzes the formation of phosphodiester linkages between 5'-phosphoryl and 3'-hydroxyl groups in double-stranded DNA using NAD as a coenzyme and as the energy source for the reaction. It is essential for DNA replication and repair of damaged DNA. The polypeptide is DNA ligase (Burkholderia pseudomallei (strain 1106a)).